A 96-amino-acid polypeptide reads, in one-letter code: Nucleoid-associated protein CT_335 (96 aa).

This sequence belongs to the YbaB/EbfC family. In terms of assembly, homodimer.

The protein resides in the cytoplasm. The protein localises to the nucleoid. Functionally, binds to DNA and alters its conformation. May be involved in regulation of gene expression, nucleoid organization and DNA protection. The chain is Nucleoid-associated protein CT_335 from Chlamydia trachomatis serovar D (strain ATCC VR-885 / DSM 19411 / UW-3/Cx).